Consider the following 186-residue polypeptide: UPF0340 protein SEQ_1951 (186 aa).

Belongs to the UPF0340 family.

This Streptococcus equi subsp. equi (strain 4047) protein is UPF0340 protein SEQ_1951.